Consider the following 428-residue polypeptide: 3-phosphoshikimate 1-carboxyvinyltransferase (428 aa).

Residues K21, S22, and R26 each contribute to the 3-phosphoshikimate site. Residue K21 participates in phosphoenolpyruvate binding. 2 residues coordinate phosphoenolpyruvate: G91 and R119. Residues S164, Q166, D313, and K340 each coordinate 3-phosphoshikimate. Q166 contributes to the phosphoenolpyruvate binding site. Residue D313 is the Proton acceptor of the active site. Phosphoenolpyruvate contacts are provided by R344 and R386.

The protein belongs to the EPSP synthase family. As to quaternary structure, monomer.

The protein resides in the cytoplasm. The catalysed reaction is 3-phosphoshikimate + phosphoenolpyruvate = 5-O-(1-carboxyvinyl)-3-phosphoshikimate + phosphate. It participates in metabolic intermediate biosynthesis; chorismate biosynthesis; chorismate from D-erythrose 4-phosphate and phosphoenolpyruvate: step 6/7. Catalyzes the transfer of the enolpyruvyl moiety of phosphoenolpyruvate (PEP) to the 5-hydroxyl of shikimate-3-phosphate (S3P) to produce enolpyruvyl shikimate-3-phosphate and inorganic phosphate. The polypeptide is 3-phosphoshikimate 1-carboxyvinyltransferase (Campylobacter jejuni (strain RM1221)).